We begin with the raw amino-acid sequence, 434 residues long: Mothers against decapentaplegic homolog 9 (434 aa).

The region spanning 16 to 140 is the MH1 domain; sequence PAVKRLLGWK…YRRVETPVLP (125 aa). Zn(2+) is bound by residues cysteine 68, cysteine 113, cysteine 125, and histidine 130. The segment at 171–222 is disordered; the sequence is MPHNATYPDSFQQSLGPAPPSSPGHVFPQSPCPTSYPQSPGSPSESDSPYQH. Polar residues predominate over residues 202–221; that stretch reads CPTSYPQSPGSPSESDSPYQ. Residues 236–434 enclose the MH2 domain; it reads WCSVAYYELN…SPHNPISSVS (199 aa).

Belongs to the dwarfin/SMAD family. In terms of assembly, interaction with the co-SMAD SMAD4. Interacts with PEBP2-alpha subunit. Interacts with RANBP3L. Phosphorylated on serine by BMP (bone morphogenetic proteins) type 1 receptor kinase. Phosphorylated by activin type I receptor-like kinase-2 (ALK-2).

The protein localises to the cytoplasm. Its subcellular location is the nucleus. Transcriptional modulator activated by BMP (bone morphogenetic proteins) type 1 receptor kinase. SMAD9 is a receptor-regulated SMAD (R-SMAD). Has been shown to be activated by activin type I receptor-like kinase-2 (ALK-2) which stimulates heteromerization between SMAD9 and SMAD4. ALK-2 binds TGF-beta, activin and BMP. This chain is Mothers against decapentaplegic homolog 9 (Smad9), found in Rattus norvegicus (Rat).